Here is a 52-residue protein sequence, read N- to C-terminus: Phospholamban (52 aa).

An N-acetylmethionine modification is found at M1. Residues 1–31 (MDKVQYLTRSAIRRASTIEMPQQARQNLQNL) lie on the Cytoplasmic side of the membrane. Position 16 is a phosphoserine; by PKA and DMPK (S16). T17 carries the phosphothreonine; by CaMK2 modification. A helical membrane pass occupies residues 32 to 52 (FINFCLILICLLLICIIVMLL). C36 carries the S-palmitoyl cysteine lipid modification.

This sequence belongs to the phospholamban family. Homopentamer. Can also form heterooligomers with other sarcoplasmic/endoplasmic reticulum calcium ATPase (SERCA) regulators ARLN, ERLN, SLN and STRIT1/DWORF. Monomer. Interacts with HAX1. Interacts as a monomer with ATP2A2; the interaction decreases ATP2A2 Ca(2+) affinity. Interacts with VMP1; VMP1 competes with PLN and SLN to prevent them from forming an inhibitory complex with ATP2A2. Interacts with S100A1 in a Ca(2+)-dependent manner. In terms of processing, phosphorylation by DMPK may stimulate sarcoplasmic reticulum calcium uptake in cardiomyocytes. Phosphorylation by PKA abolishes the inhibition of ATP2A2-mediated calcium uptake. Phosphorylated at Thr-17 by CaMK2, and in response to beta-adrenergic stimulation. Palmitoylated by ZDHHC16, promoting formation of the homopentamer. Post-translationally, in elongated spermatids, proteolytically cleaved by SPPL2C which modulates intracellular Ca(2+) homeostasis. In terms of tissue distribution, heart.

Its subcellular location is the endoplasmic reticulum membrane. The protein localises to the sarcoplasmic reticulum membrane. It localises to the mitochondrion membrane. The protein resides in the membrane. Functionally, reversibly inhibits the activity of ATP2A2/SERCA2 in cardiac sarcoplasmic reticulum by decreasing the apparent affinity of the ATPase for Ca(2+). Binds preferentially to the ATP-bound E1 conformational form of ATP2A2 which predominates at low Ca(2+) concentrations during the diastolic phase of the cardiac cycle. Inhibits ATP2A2 Ca(2+) affinity by disrupting its allosteric activation by ATP. Modulates the contractility of the heart muscle in response to physiological stimuli via its effects on ATP2A2. Modulates calcium re-uptake during muscle relaxation and plays an important role in calcium homeostasis in the heart muscle. The degree of ATP2A2 inhibition depends on the oligomeric state of PLN. ATP2A2 inhibition is alleviated by PLN phosphorylation. Also inhibits the activity of ATP2A3/SERCA3. Controls intracellular Ca(2+) levels in elongated spermatids and may play a role in germ cell differentiation. In the thalamic reticular nucleus of the brain, plays a role in the regulation of sleep patterns and executive functioning. The chain is Phospholamban from Canis lupus familiaris (Dog).